The following is a 1201-amino-acid chain: Stress response protein nst1 (1201 aa).

Disordered stretches follow at residues 1-178, 268-341, 429-478, 535-707, 724-848, 899-952, and 1150-1169; these read MSDP…PHTL, NQGS…YEDE, QSLH…GDAV, EEQT…PASL, IATP…PLMN, QPSG…QRDV, and EPDT…PGEI. A compositionally biased stretch (basic residues) spans 40–50; the sequence is NRKKQKRRQKQ. Residues 84–114 show a composition bias toward basic and acidic residues; the sequence is VSDDHDLDERANGETYYEEIHDATHDLDDHP. Residues 116–128 show a composition bias toward polar residues; the sequence is NLSNGQPGQQNAT. The segment covering 130-141 has biased composition (basic residues); the sequence is RKSKKKKGKKNR. Composition is skewed to polar residues over residues 145–164 and 293–302; these read QTMG…SMSQ and GQHTRTQGQF. 2 stretches are compositionally biased toward acidic residues: residues 313-341 and 441-466; these read PEDD…YEDE and DDDD…EDEM. Residues 520–673 adopt a coiled-coil conformation; the sequence is KVAEQRQQKL…KTKDERERKL (154 aa). Basic and acidic residues-rich tracts occupy residues 535–553 and 563–692; these read EEQT…EAQK and QAKE…DPQA. Positions 740–767 are enriched in polar residues; sequence QPSQQGSHTSSPRSQPASTEPSQVSISP. Composition is skewed to low complexity over residues 769 to 805 and 926 to 938; these read SMAP…LSPL and PISR…RPSS.

Belongs to the NST1 family.

The protein localises to the cytoplasm. In terms of biological role, may act as a negative regulator of salt tolerance. The chain is Stress response protein nst1 (nst1) from Aspergillus niger (strain ATCC MYA-4892 / CBS 513.88 / FGSC A1513).